We begin with the raw amino-acid sequence, 880 residues long: MVTSDETVLATTTNKTSITTEPMEPKSSDESTDSETDKIKILKAEQREALTEATGSVEVNGNEENGHVECATVDEVAHVEEDKVEEATNSVVDLSSNGSSATTSVPVEEQEEKANEDETNDVVMETSENGENGKEENGTAMEVAENPAVTENGSKSDGETETDRVAIKDSQEDDSEPVNGSVKPEEKEEKNDTDAPMEEEDQNGKGVKRPVECIQLDDDDDDIQEVSPPVPAKKQKTEETKQEPKQEAKAEPADDNEQAQIRLLDKLQEYVGDQRGQPCNKTRKVLDTLLGAINAQVQKEPLSVRKLILDKVLVLPNTISFPPSQVCDLLIEHDPEMPLAKVINRMFGEERPKLSDSEKRERQQMKQHNPVSHMTKLLVDIGQDLVQETTYCDIVHAKNLPEIPKNIETYKQVAAQLKPVWETLKRKNEPYKLKMSRCGVCGFQTESKLAMAAHKETLHFTGSKFQCTLCKETDTNEQRMKEHYFEAHLIIAKSEEKESKYPCAICEEDFNFKGVREQHYKQCKKDYIRIRNIMMPKQEDHLYLNRWLWERPPVDPSIIQQQQAAALQQAEQKKRHQQALLREQHAQAQAAQLLRKQQLQQQQQAQRLREQQAQAQYRQMAQLIQQQQQQQNRNNANNMSNSLIQAMQAQLRRSGTGTSPQNLNLLQKQMAAVLKNQNPAQIQALVASMNKQTQSPKTPTTPKVAKAAATPTLPLAMSASSSSPGVSFQCEICDQTVHEKDKYLSHLQVLHKQMVGKTLQDMTQGAPLACSRCRDRFWTYEGLERHLVMSHGLVTADLLLKAQKKEDGGRCKTCGKQYAFNMLQHLVADHQVKLCSAEIMYSCDVCAFKCSSYQTLEAHLSSTHPKSADKKKEELITLDD.

Residues 1–20 (MVTSDETVLATTTNKTSITT) show a composition bias toward polar residues. 3 disordered regions span residues 1-37 (MVTS…SETD), 82-257 (DKVE…DDNE), and 350-370 (ERPK…QHNP). A compositionally biased stretch (basic and acidic residues) spans 23-37 (MEPKSSDESTDSETD). The span at 87 to 105 (ATNSVVDLSSNGSSATTSV) shows a compositional bias: polar residues. A compositionally biased stretch (acidic residues) spans 108-120 (EEQEEKANEDETN). Composition is skewed to basic and acidic residues over residues 154-170 (SKSD…IKDS) and 183-193 (KPEEKEEKNDT). Over residues 215-224 (QLDDDDDDIQ) the composition is skewed to acidic residues. Basic and acidic residues-rich tracts occupy residues 235–252 (QKTE…KAEP) and 350–364 (ERPK…ERQQ). C2H2-type zinc fingers lie at residues 436–459 (SRCG…ETLH) and 465–488 (FQCT…FEAH). Residues 501–523 (YPCAICEEDFNFKGVREQHYKQC) form a CCHC-type zinc finger. 4 consecutive C2H2-type zinc fingers follow at residues 728–751 (FQCE…QVLH), 768–791 (LACS…VMSH), 809–830 (GRCK…VADH), and 841–864 (YSCD…SSTH).

In terms of assembly, interacts with hda-1, let-418, lin-1, mog-1, mog-4, mog-5, mog-6, pie-1 and unc-98.

The protein localises to the nucleus. In terms of biological role, has a broad role in development, specifically in the genetic pathway SynMuvB that negatively regulates specification of the vulval cell fate. Required for fem-3 3'-UTR-mediated repression in the regulation of the sperm/oocyte switch. Acts by regulating the translation of fem-3 mRNA, by binding to its 3'-UTR. In Caenorhabditis briggsae, this protein is MOG interacting and ectopic P-granules protein 1.